The primary structure comprises 127 residues: Large ribosomal subunit protein bL17 (127 aa).

This sequence belongs to the bacterial ribosomal protein bL17 family. Part of the 50S ribosomal subunit. Contacts protein L32.

This Actinobacillus pleuropneumoniae serotype 7 (strain AP76) protein is Large ribosomal subunit protein bL17.